The sequence spans 779 residues: Autophagy-related protein 13 (779 aa).

4 disordered regions span residues 298 to 368, 392 to 488, 520 to 541, and 571 to 652; these read PLTE…GGSL, PRSS…LTGG, TAHN…DALN, and GSGS…SAAT. Residues 308-320 are compositionally biased toward polar residues; that stretch reads KANNTSMSVSPCS. The segment covering 394 to 425 has biased composition (low complexity); that stretch reads SSTSSTHTTSNIPIAPSSSSNSTNATNMNNMS. Residues 426 to 455 are compositionally biased toward polar residues; the sequence is YPRSISSSHGSNMQHDDSMFSNPDSTTNTP. Low complexity predominate over residues 456-470; that stretch reads RFSSSFGSRASRRYS. Composition is skewed to polar residues over residues 471–488 and 520–533; these read NTSV…LTGG and TAHN…NMGS. Composition is skewed to low complexity over residues 593 to 602 and 620 to 632; these read SIRSPSPSMS and SSGA…LSLP. Residues 642-652 are compositionally biased toward polar residues; the sequence is PSATEPTSAAT.

This sequence belongs to the ATG13 family. Fungi subfamily. Interacts with ATG1 to form the ATG1-ATG13 kinase complex.

Its subcellular location is the cytoplasm. It localises to the preautophagosomal structure. Its function is as follows. Activates the ATG1 kinase in a nutritional condition dependent manner through the TOR pathway, leading to autophagy. Also involved in cytoplasm to vacuole transport (Cvt) and more specifically in Cvt vesicle formation. Seems to play a role in the switching machinery regulating the conversion between the Cvt pathway and autophagy. Finally, ATG13 is also required for glycogen storage during stationary phase. This Scheffersomyces stipitis (strain ATCC 58785 / CBS 6054 / NBRC 10063 / NRRL Y-11545) (Yeast) protein is Autophagy-related protein 13 (ATG13).